Consider the following 271-residue polypeptide: uncharacterized protein (271 aa).

Residues 1–20 (MPDLHTLPAGSRPERAIRNN) form a disordered region.

It belongs to the PEP2 family.

This is an uncharacterized protein from Aspergillus terreus (strain NIH 2624 / FGSC A1156).